Here is a 335-residue protein sequence, read N- to C-terminus: Cathepsin B (335 aa).

An N-terminal signal peptide occupies residues 1–19 (MWQLLATLSCLLVLTSARS). Positions 20–79 (SLHFPPLSDEMVNYVNKQNTTWKAGHNFYNVDLSYVKKLCGAILGGPKLPQRDAFAADMV) are cleaved as a propeptide — activation peptide. Disulfide bonds link Cys93–Cys122, Cys105–Cys150, Cys141–Cys207, Cys142–Cys146, Cys179–Cys211, and Cys187–Cys198. Cys108 is an active-site residue. Asn192 is a glycosylation site (N-linked (GlcNAc...) asparagine). Lys220 carries the post-translational modification N6-acetyllysine. Active-site residues include His278 and Asn298. A propeptide spanning residues 333–335 (HQH) is cleaved from the precursor.

This sequence belongs to the peptidase C1 family. In terms of assembly, dimer of a heavy chain and a light chain cross-linked by a disulfide bond. Interacts with SRPX2. Directly interacts with SHKBP1.

The protein resides in the lysosome. Its subcellular location is the melanosome. The protein localises to the secreted. It is found in the extracellular space. It localises to the apical cell membrane. The catalysed reaction is Hydrolysis of proteins with broad specificity for peptide bonds. Preferentially cleaves -Arg-Arg-|-Xaa bonds in small molecule substrates (thus differing from cathepsin L). In addition to being an endopeptidase, shows peptidyl-dipeptidase activity, liberating C-terminal dipeptides.. Functionally, thiol protease which is believed to participate in intracellular degradation and turnover of proteins. Cleaves matrix extracellular phosphoglycoprotein MEPE. Involved in the solubilization of cross-linked TG/thyroglobulin in the thyroid follicle lumen. Has also been implicated in tumor invasion and metastasis. This is Cathepsin B (CTSB) from Ovis aries (Sheep).